Reading from the N-terminus, the 300-residue chain is Ribosomal protein bS6--L-glutamate ligase (300 aa).

Residues 104–287 (MQLLARQGID…IASKMIRWIE (184 aa)) enclose the ATP-grasp domain. Residues lysine 141, 178–179 (EY), aspartate 187, and 211–213 (RSN) each bind ATP. Mg(2+) is bound by residues aspartate 248, glutamate 260, and asparagine 262. The Mn(2+) site is built by aspartate 248, glutamate 260, and asparagine 262.

This sequence belongs to the RimK family. The cofactor is Mg(2+). Mn(2+) serves as cofactor.

Functionally, an L-glutamate ligase that catalyzes the ATP-dependent post-translational addition of glutamate residues to the C-terminus of ribosomal protein bS6 (RpsF). Is also able to catalyze the synthesis of poly-alpha-glutamate in vitro, via ATP hydrolysis from unprotected glutamate as substrate. The number of glutamate residues added to either RpsF or to poly-alpha-glutamate changes with pH. In Escherichia coli O81 (strain ED1a), this protein is Ribosomal protein bS6--L-glutamate ligase.